Reading from the N-terminus, the 238-residue chain is MKYKYSTVLLKLSGEALKSENEIYNKEKLEDIAKQIVELAKNGLKLGIVIGGGNIWRGKLGTDIDMPQINADYMGMLATVMNGLALESTIKRLGYDKVNVYSSLPIETVTDDYNFKRARLKMNEGYISIFVGGTGFSYFTTDTNSVIRAIEIGADAVLMAKNGVKGVYDSDPNLNPNAKFYKKLTHREIAENQLRVMDLTAATLAKDAKLPIEVFDMQGQNNIIKVMEGSLESTIIEE.

Residue 11-14 (KLSG) participates in ATP binding. Gly52 lines the UMP pocket. 2 residues coordinate ATP: Gly53 and Arg57. UMP contacts are provided by residues Asp72 and 134-141 (TGFSYFTT). 3 residues coordinate ATP: Asn162, Tyr168, and Asp171.

The protein belongs to the UMP kinase family. Homohexamer.

The protein localises to the cytoplasm. It carries out the reaction UMP + ATP = UDP + ADP. The protein operates within pyrimidine metabolism; CTP biosynthesis via de novo pathway; UDP from UMP (UMPK route): step 1/1. Inhibited by UTP. Catalyzes the reversible phosphorylation of UMP to UDP. This chain is Uridylate kinase, found in Mesoplasma florum (strain ATCC 33453 / NBRC 100688 / NCTC 11704 / L1) (Acholeplasma florum).